The chain runs to 331 residues: Lipoate-protein ligase LplJ (331 aa).

In terms of domain architecture, BPL/LPL catalytic spans 27 to 214 (DPEQQYLLFY…HIFNTNDVGN (188 aa)). ATP is bound by residues arginine 69, 74–77 (GAVY), and lysine 131. Lysine 131 contributes to the (R)-lipoate binding site.

The protein belongs to the LplA family.

The protein resides in the cytoplasm. The enzyme catalyses L-lysyl-[lipoyl-carrier protein] + (R)-lipoate + ATP = N(6)-[(R)-lipoyl]-L-lysyl-[lipoyl-carrier protein] + AMP + diphosphate + H(+). Its pathway is protein modification; protein lipoylation via exogenous pathway; protein N(6)-(lipoyl)lysine from lipoate: step 1/2. It participates in protein modification; protein lipoylation via exogenous pathway; protein N(6)-(lipoyl)lysine from lipoate: step 2/2. Catalyzes both the ATP-dependent activation of exogenously supplied lipoate to lipoyl-AMP and the transfer of the activated lipoyl onto the lipoyl domains of lipoate-dependent enzymes. Is also able to use octanoate as substrate. The chain is Lipoate-protein ligase LplJ (lplJ) from Bacillus subtilis (strain 168).